Reading from the N-terminus, the 126-residue chain is UPF0102 protein TP_0913 (126 aa).

The protein belongs to the UPF0102 family.

The chain is UPF0102 protein TP_0913 from Treponema pallidum (strain Nichols).